The primary structure comprises 217 residues: tRNA 5-hydroxyuridine methyltransferase (217 aa).

Residues Met-38, Ser-68, Glu-85, 113 to 114 (DA), and Asp-133 each bind S-adenosyl-L-methionine. Mg(2+) is bound by residues Asp-133, Asp-159, and Asn-160.

The protein belongs to the class I-like SAM-binding methyltransferase superfamily. Cation-dependent O-methyltransferase family. Homodimer.

It catalyses the reaction 5-hydroxyuridine(34) in tRNA + S-adenosyl-L-methionine = 5-methoxyuridine(34) in tRNA + S-adenosyl-L-homocysteine + H(+). Its function is as follows. Catalyzes the methylation of 5-hydroxyuridine (ho5U) to form 5-methoxyuridine (mo5U) at position 34 in tRNAs. The polypeptide is tRNA 5-hydroxyuridine methyltransferase (Bacillus subtilis (strain 168)).